Consider the following 224-residue polypeptide: uncharacterized protein (224 aa).

The protein resides in the virion. This is an uncharacterized protein from Acanthamoeba polyphaga mimivirus (APMV).